We begin with the raw amino-acid sequence, 234 residues long: Opacity protein opA56 (234 aa).

A1 is a signal peptide.

It belongs to the opacity porin family.

Its subcellular location is the cell outer membrane. Its function is as follows. Implicated in a number of adherence functions. OPA proteins are implicated in pathogenesis and are subject to phase variation. The chain is Opacity protein opA56 (opaF) from Neisseria gonorrhoeae.